The following is a 196-amino-acid chain: Probable GTP-binding protein EngB (196 aa).

Positions 24-196 constitute an EngB-type G domain; that stretch reads ELSEVALSGR…IWNLIEPYIS (173 aa). GTP contacts are provided by residues 32-39, 59-63, 77-80, 144-147, and 176-178; these read GRSNVGKS, GKTQT, DVPG, TKED, and YSS. Mg(2+) contacts are provided by Ser39 and Thr61.

Belongs to the TRAFAC class TrmE-Era-EngA-EngB-Septin-like GTPase superfamily. EngB GTPase family. Mg(2+) is required as a cofactor.

Necessary for normal cell division and for the maintenance of normal septation. The sequence is that of Probable GTP-binding protein EngB from Staphylococcus aureus (strain MW2).